Here is a 55-residue protein sequence, read N- to C-terminus: Large ribosomal subunit protein bL33 (55 aa).

Belongs to the bacterial ribosomal protein bL33 family.

This Orientia tsutsugamushi (strain Boryong) (Rickettsia tsutsugamushi) protein is Large ribosomal subunit protein bL33.